Reading from the N-terminus, the 1469-residue chain is uncharacterized protein (1469 aa).

Residues 146–180 (GDHITPKEEEEKEKEKEKEKEKEKEKEKEKEKDSE) show a composition bias toward basic and acidic residues. Disordered stretches follow at residues 146-186 (GDHI…LQEQ), 231-255 (IQNNQNNQNNNDSPINKEIEDDNNN), 306-344 (TTTTTTTTTSSSNNCTNSISNTDKSTTTNCPPVENGGDS), 430-455 (LNFNNNNNNNNNNNNNNNNNSQPYHY), 520-560 (PVKN…NNNS), 654-706 (TTTT…PLVR), 719-755 (RTQTQLQTKIQPKSPQPQPTAAPEPQKPPTPSIVKNQ), 881-958 (YNNI…NIIN), and 1329-1369 (NCSS…NSSN). Composition is skewed to low complexity over residues 232-241 (QNNQNNQNNN), 306-327 (TTTTTTTTTSSSNNCTNSISNT), 430-449 (LNFNNNNNNNNNNNNNNNNN), 523-559 (NNNNNNNNNNNNNNNNNNNNNNNNNNNNNNNNNINNN), and 654-693 (TTTTTTNTNSTNTNSTINATSPPHTPKLSSSPLLTTTTTP). Polar residues predominate over residues 719–731 (RTQTQLQTKIQPK). Positions 732–749 (SPQPQPTAAPEPQKPPTP) are enriched in pro residues. 2 stretches are compositionally biased toward low complexity: residues 1329–1347 (NCSSSSSSSESNGIDSGSE) and 1354–1369 (RSNTTNNSNNINNSSN).

This is an uncharacterized protein from Dictyostelium discoideum (Social amoeba).